Here is a 763-residue protein sequence, read N- to C-terminus: Phosphoglycerol transferase I (763 aa).

Helical transmembrane passes span 1-21, 26-46, 77-97, and 108-128; these read MSEL…AWKA, WWFA…ITLF, ILPG…LGWI, and FGYS…SPAF.

It belongs to the OpgB family.

The protein resides in the cell inner membrane. It catalyses the reaction a phosphatidylglycerol + a membrane-derived-oligosaccharide D-glucose = a 1,2-diacyl-sn-glycerol + a membrane-derived-oligosaccharide 6-(glycerophospho)-D-glucose.. It participates in glycan metabolism; osmoregulated periplasmic glucan (OPG) biosynthesis. Functionally, transfers a phosphoglycerol residue from phosphatidylglycerol to the membrane-bound nascent glucan backbones. The polypeptide is Phosphoglycerol transferase I (Escherichia coli O45:K1 (strain S88 / ExPEC)).